We begin with the raw amino-acid sequence, 582 residues long: Formate--tetrahydrofolate ligase (582 aa).

65-72 (TPLGEGKT) is a binding site for ATP.

The protein belongs to the formate--tetrahydrofolate ligase family.

It carries out the reaction (6S)-5,6,7,8-tetrahydrofolate + formate + ATP = (6R)-10-formyltetrahydrofolate + ADP + phosphate. It participates in one-carbon metabolism; tetrahydrofolate interconversion. The chain is Formate--tetrahydrofolate ligase from Aliivibrio fischeri (strain ATCC 700601 / ES114) (Vibrio fischeri).